Consider the following 156-residue polypeptide: Arginine repressor (156 aa).

The protein belongs to the ArgR family.

It is found in the cytoplasm. It functions in the pathway amino-acid biosynthesis; L-arginine biosynthesis [regulation]. Its function is as follows. Regulates arginine biosynthesis genes. The polypeptide is Arginine repressor (Escherichia fergusonii (strain ATCC 35469 / DSM 13698 / CCUG 18766 / IAM 14443 / JCM 21226 / LMG 7866 / NBRC 102419 / NCTC 12128 / CDC 0568-73)).